Reading from the N-terminus, the 1112-residue chain is Lysylphosphatidylglycerol biosynthesis bifunctional protein LysX (1112 aa).

Residues 1–613 (MTLTSPPRTR…VLHHDGTAPD (613 aa)) are phosphatidylglycerol lysyltransferase. 7 helical membrane passes run 18–38 (VPAAAGWTVGVIATLSLIASV), 60–80 (FPDTSFAWAFVLALLAGALAA), 84–104 (IAWWILLLYMVAAAGWNVADL), 118–138 (VIGLAFHLAAVAFLLLARPLF), 152–172 (GVLAAGMAVGVLVGWGLLELF), 209–229 (VNALLGLFGALALMAAAIVLF), and 308–328 (AWLALCGTYGWAPGVMGASVG). A lysine--tRNA ligase region spans residues 614–1112 (MSGLRTDTAD…TLPFPLARPR (499 aa)). The segment at residues 675–748 (VAGRVLRIRD…GTRSLLVRHW (74 aa)) is a DNA-binding region (OB). Mg(2+)-binding residues include aspartate 1024 and glutamate 1031.

This sequence in the N-terminal section; belongs to the LPG synthetase family. In the C-terminal section; belongs to the class-II aminoacyl-tRNA synthetase family. Mg(2+) serves as cofactor.

It is found in the cell membrane. The catalysed reaction is tRNA(Lys) + L-lysine + ATP = L-lysyl-tRNA(Lys) + AMP + diphosphate. It carries out the reaction L-lysyl-tRNA(Lys) + a 1,2-diacyl-sn-glycero-3-phospho-(1'-sn-glycerol) = a 1,2-diacyl-sn-glycero-3-phospho-1'-(3'-O-L-lysyl)-sn-glycerol + tRNA(Lys). In terms of biological role, catalyzes the production of L-lysyl-tRNA(Lys)transfer and the transfer of a lysyl group from L-lysyl-tRNA(Lys) to membrane-bound phosphatidylglycerol (PG), which produces lysylphosphatidylglycerol (LPG), one of the components of the bacterial membrane with a positive net charge. LPG synthesis contributes to the resistance to cationic antimicrobial peptides (CAMPs) and likely protects M.tuberculosis against the CAMPs produced by competiting microorganisms (bacteriocins). In fact, the modification of anionic phosphatidylglycerol with positively charged L-lysine results in repulsion of the peptides. This chain is Lysylphosphatidylglycerol biosynthesis bifunctional protein LysX (lysX), found in Mycobacterium sp. (strain KMS).